We begin with the raw amino-acid sequence, 597 residues long: MSNGLRTSFERISLFHPQGFISESSAEFCCSAPSNLSPKFPMDHWERTSSFSPRCRHPDLRVRLQSSPPRGPQSDRNLPSLQPLELHGDRPGLCDVHETLQVQKIGLRQSKLLRTSKLPSHRGRFRSIPLHLHLSSEVRNRFHARCPDVLQPLSDTRPLHSVPLSSEAPLQSSCSPRKLLHRPLSPPKPLHLHNFRQHSSLCSRRSPCRKLRPTPRCNQLAQAQQHPLPSSKPLSLQAGILGPCPLPPHNKRSPSPAVIRKTAGILPHPKLPPSSRGHLPSSTSSSSPRSNRGVRCSVHLHKSRSNSQDLRSCRVRSNSLQQTPILMGHFKSLGQSPNLRSFERPRPTRRSLRLLPLSPQKVPTVHVPTHQQSGHKGPSLPRPHSPSRQTHHARLPHSKRVSLPNSVLHHDRPKRPIHFGSFPINVAPSHLLPRKLWSRASSPPTCSPTTSNHGHPEEALRFLPKNLPQHCQMALMENYCSHFSSPSSSVSFPEDHQSSLPPISTRWVQCSSPSFSLQSFLVIGDIPCPISFPLSSPQSHSSESLRGDSPPSSHLPSSPSSACSGDSFASCSSFGPSNPTSSASALGGNHFNFSFFS.

Disordered regions lie at residues 62 to 82 (VRLQSSPPRGPQSDRNLPSLQ), 160 to 198 (HSVPLSSEAPLQSSCSPRKLLHRPLSPPKPLHLHNFRQH), 218 to 315 (NQLA…SCRV), 329 to 411 (HFKS…LHHD), and 535 to 586 (SSPQ…ASAL). A compositionally biased stretch (polar residues) spans 64–80 (LQSSPPRGPQSDRNLPS). The span at 218–234 (NQLAQAQQHPLPSSKPL) shows a compositional bias: polar residues. Over residues 273 to 291 (PSSRGHLPSSTSSSSPRSN) the composition is skewed to low complexity. Residues 305 to 315 (SNSQDLRSCRV) show a composition bias toward polar residues. Basic residues predominate over residues 389-400 (QTHHARLPHSKR). A compositionally biased stretch (low complexity) spans 535–574 (SSPQSHSSESLRGDSPPSSHLPSSPSSACSGDSFASCSSF). Residues 575 to 584 (GPSNPTSSAS) show a composition bias toward polar residues.

It belongs to the tymoviridae protein p69 family.

The chain is 66 kDa protein from Ononis.